The following is a 143-amino-acid chain: Dehydrin DHN2 (143 aa).

The segment covering 1–10 (MEYQGQTGHA) has biased composition (polar residues). Residues 1–143 (MEYQGQTGHA…IKEKLPGGQH (143 aa)) are disordered. The span at 24-34 (GHGGATGGPTG) shows a compositional bias: gly residues. The span at 35–46 (THGAAAAAAGTG) shows a compositional bias: low complexity. Basic and acidic residues predominate over residues 51 to 61 (TRDDHKTDGVL). The segment covering 62–71 (RRSGSSSSSS) has biased composition (low complexity). Basic and acidic residues predominate over residues 86–101 (KEKIKEKLPGGAHKDA). A compositionally biased stretch (low complexity) spans 109 to 123 (AAGEYAGTGTHGAEA). Residues 124 to 143 (TGEKKGVMDKIKEKLPGGQH) show a composition bias toward basic and acidic residues.

The protein belongs to the plant dehydrin family.

The sequence is that of Dehydrin DHN2 (DHN2) from Hordeum vulgare (Barley).